Reading from the N-terminus, the 307-residue chain is Auxin-induced protein PCNT115 (307 aa).

The active-site Proton donor is Tyr-64. His-136 provides a ligand contact to substrate. Residue 215 to 225 (SPLGRGFLSSG) participates in NADP(+) binding.

The protein belongs to the aldo/keto reductase family. Aldo/keto reductase 2 subfamily.

This Nicotiana tabacum (Common tobacco) protein is Auxin-induced protein PCNT115.